A 140-amino-acid chain; its full sequence is Nucleoside diphosphate kinase (140 aa).

Lysine 9, phenylalanine 57, arginine 85, threonine 91, arginine 102, and asparagine 112 together coordinate ATP. The active-site Pros-phosphohistidine intermediate is histidine 115.

Belongs to the NDK family. In terms of assembly, homotetramer. It depends on Mg(2+) as a cofactor.

It localises to the cytoplasm. It carries out the reaction a 2'-deoxyribonucleoside 5'-diphosphate + ATP = a 2'-deoxyribonucleoside 5'-triphosphate + ADP. The catalysed reaction is a ribonucleoside 5'-diphosphate + ATP = a ribonucleoside 5'-triphosphate + ADP. In terms of biological role, major role in the synthesis of nucleoside triphosphates other than ATP. The ATP gamma phosphate is transferred to the NDP beta phosphate via a ping-pong mechanism, using a phosphorylated active-site intermediate. This chain is Nucleoside diphosphate kinase, found in Chlorobium limicola (strain DSM 245 / NBRC 103803 / 6330).